Consider the following 218-residue polypeptide: Small ribosomal subunit protein uS3c (218 aa).

Residues 43 to 118 enclose the KH type-2 domain; sequence IKDYVKKNKK…RLNIAITRIE (76 aa).

This sequence belongs to the universal ribosomal protein uS3 family. As to quaternary structure, part of the 30S ribosomal subunit.

Its subcellular location is the plastid. It is found in the chloroplast. The chain is Small ribosomal subunit protein uS3c (rps3) from Phalaenopsis aphrodite subsp. formosana (Moth orchid).